The primary structure comprises 405 residues: L-rhamnonate dehydratase (405 aa).

The substrate site is built by His-33 and Arg-59. The Mg(2+) site is built by Asp-226, Glu-252, and Glu-280. His-329 (proton acceptor) is an active-site residue. Position 349 (Glu-349) interacts with substrate.

This sequence belongs to the mandelate racemase/muconate lactonizing enzyme family. RhamD subfamily. In terms of assembly, homooctamer; tetramer of dimers. Mg(2+) is required as a cofactor.

It catalyses the reaction L-rhamnonate = 2-dehydro-3-deoxy-L-rhamnonate + H2O. Catalyzes the dehydration of L-rhamnonate to 2-keto-3-deoxy-L-rhamnonate (KDR). The chain is L-rhamnonate dehydratase from Escherichia coli O9:H4 (strain HS).